A 341-amino-acid polypeptide reads, in one-letter code: S-adenosylmethionine:tRNA ribosyltransferase-isomerase (341 aa).

It belongs to the QueA family. In terms of assembly, monomer.

It localises to the cytoplasm. It catalyses the reaction 7-aminomethyl-7-carbaguanosine(34) in tRNA + S-adenosyl-L-methionine = epoxyqueuosine(34) in tRNA + adenine + L-methionine + 2 H(+). The protein operates within tRNA modification; tRNA-queuosine biosynthesis. Functionally, transfers and isomerizes the ribose moiety from AdoMet to the 7-aminomethyl group of 7-deazaguanine (preQ1-tRNA) to give epoxyqueuosine (oQ-tRNA). The protein is S-adenosylmethionine:tRNA ribosyltransferase-isomerase of Clostridium botulinum (strain Kyoto / Type A2).